Consider the following 32-residue polypeptide: Cytochrome b6-f complex subunit 7 (32 aa).

The helical transmembrane segment at 9-27 (AAVFWVLIPVGLLGGVLLL) threads the bilayer.

The protein belongs to the PetM family. As to quaternary structure, the 4 large subunits of the cytochrome b6-f complex are cytochrome b6, subunit IV (17 kDa polypeptide, PetD), cytochrome f and the Rieske protein, while the 4 small subunits are PetG, PetL, PetM and PetN. The complex functions as a dimer.

Its subcellular location is the cellular thylakoid membrane. Component of the cytochrome b6-f complex, which mediates electron transfer between photosystem II (PSII) and photosystem I (PSI), cyclic electron flow around PSI, and state transitions. The chain is Cytochrome b6-f complex subunit 7 from Prochlorococcus marinus (strain NATL1A).